The chain runs to 488 residues: Protein kinase C and casein kinase substrate in neurons 2 protein (488 aa).

Positions 11–282 constitute an F-BAR domain; it reads VEVSSDSFWE…SIKAADAVED (272 aa). Residues 25–274 are a coiled coil; that stretch reads KRTVKRIDDG…GIYRELEQSI (250 aa). Lys-53 carries the post-translational modification N6-acetyllysine. The segment covering 163–176 has biased composition (basic and acidic residues); the sequence is CKEEKLAVSREANS. The interval 163-183 is disordered; sequence CKEEKLAVSREANSKADPSLN. Ser-273 is modified (phosphoserine). Ser-315 carries the phosphoserine; by PKC modification. The disordered stretch occupies residues 316–429; that stretch reads RREKKKAADG…PFDEDTTSGT (114 aa). Residues 329 to 364 show a composition bias toward polar residues; the sequence is TGINQTGDQSGQNKPSSNLSVPSNPAQSTQLQSSYN. The NPF1 motif lies at 364-366; the sequence is NPF. Position 375 is a phosphoserine; by IKKB (Ser-375). The segment covering 386-396 has biased composition (polar residues); sequence NVSSYEKTQNY. Ser-401 carries the phosphoserine modification. Over residues 406-418 the composition is skewed to polar residues; the sequence is NNPFSSTDANGDS. Positions 407 to 409 match the NPF2 motif; that stretch reads NPF. The short motif at 419–421 is the NPF3 element; it reads NPF. The SH3 domain occupies 428–488; the sequence is GTEVRVRALY…YPANYVEAIQ (61 aa). Residue Ser-448 is modified to Phosphoserine.

Belongs to the PACSIN family. As to quaternary structure, homodimer. May form heterooligomers with other PACSINs. Interacts (via NPF motifs) with EHD1 (via EH domain). Interacts with EHD3. Interacts (via the SH3 domain) with MICALL1. Interacts with RAC1. Interacts (via SH3 domain) with DNM1, SYN1, SYNJ1 and WASL. Interacts with CAV1. Interacts with TRPV4. Forms a complex with EHD4 and MICALL1; the complex controls CDH5 trafficking and coordinates angiogenesis. Post-translationally, phosphorylated by casein kinase 2 (CK2) and protein kinase C (PKC). Phosphorylation by PKC probably decreases the membrane binding and tubulation capacities of PACSIN2, thereby modulating the lifetime of caveolae. In terms of tissue distribution, widely expressed (at protein level). Isoforms 1/3 are predominantly expressed in heart and in PC-12 cells, a pheochromocytoma cell line (at protein level). Isoforms 2/4 are widely expressed with highest levels in muscle, testis and brain (at protein level).

Its subcellular location is the cytoplasm. It localises to the cytoskeleton. It is found in the cytoplasmic vesicle membrane. The protein localises to the cell projection. The protein resides in the ruffle membrane. Its subcellular location is the early endosome. It localises to the recycling endosome membrane. It is found in the cell membrane. The protein localises to the membrane. The protein resides in the caveola. Its subcellular location is the cell junction. It localises to the adherens junction. Regulates the morphogenesis and endocytosis of caveolae. Lipid-binding protein that is able to promote the tubulation of the phosphatidic acid-containing membranes it preferentially binds. Plays a role in intracellular vesicle-mediated transport. Involved in the endocytosis of cell-surface receptors like the EGF receptor, contributing to its internalization in the absence of EGF stimulus. Facilitates endothelial front-rear polarity during migration by recruiting EHD4 and MICALL1 to asymmetric adherens junctions between leader and follower cells. This is Protein kinase C and casein kinase substrate in neurons 2 protein (Pacsin2) from Rattus norvegicus (Rat).